The chain runs to 118 residues: Small ribosomal subunit protein uS13 (118 aa).

The interval 93-118 (KKLPVRGQRTKTNARTRKGPRKLMKK) is disordered.

The protein belongs to the universal ribosomal protein uS13 family. Part of the 30S ribosomal subunit. Forms a loose heterodimer with protein S19. Forms two bridges to the 50S subunit in the 70S ribosome.

Located at the top of the head of the 30S subunit, it contacts several helices of the 16S rRNA. In the 70S ribosome it contacts the 23S rRNA (bridge B1a) and protein L5 of the 50S subunit (bridge B1b), connecting the 2 subunits; these bridges are implicated in subunit movement. Contacts the tRNAs in the A and P-sites. The chain is Small ribosomal subunit protein uS13 from Buchnera aphidicola subsp. Baizongia pistaciae (strain Bp).